We begin with the raw amino-acid sequence, 98 residues long: NADH-ubiquinone oxidoreductase chain 4L (98 aa).

The next 3 membrane-spanning stretches (helical) occupy residues Met-1 to Ile-21, Ser-29 to Leu-49, and Ile-61 to Val-81.

Belongs to the complex I subunit 4L family. In terms of assembly, core subunit of respiratory chain NADH dehydrogenase (Complex I) which is composed of 45 different subunits.

It is found in the mitochondrion inner membrane. It carries out the reaction a ubiquinone + NADH + 5 H(+)(in) = a ubiquinol + NAD(+) + 4 H(+)(out). In terms of biological role, core subunit of the mitochondrial membrane respiratory chain NADH dehydrogenase (Complex I) which catalyzes electron transfer from NADH through the respiratory chain, using ubiquinone as an electron acceptor. Part of the enzyme membrane arm which is embedded in the lipid bilayer and involved in proton translocation. This chain is NADH-ubiquinone oxidoreductase chain 4L (MT-ND4L), found in Lepus europaeus (European hare).